The following is a 61-amino-acid chain: Large ribosomal subunit protein bL32 (61 aa).

A compositionally biased stretch (basic residues) spans 1-16 (MAVPRRKTSPSRRGMR). The interval 1 to 61 (MAVPRRKTSP…RQVLKVKKED (61 aa)) is disordered. Residues 17–44 (RSADALKKPTYVEDKDSGELRRPHHLDL) are compositionally biased toward basic and acidic residues.

This sequence belongs to the bacterial ribosomal protein bL32 family.

The polypeptide is Large ribosomal subunit protein bL32 (Afipia carboxidovorans (strain ATCC 49405 / DSM 1227 / KCTC 32145 / OM5) (Oligotropha carboxidovorans)).